The following is a 98-amino-acid chain: Protein FAM24A (98 aa).

Positions 1–29 are cleaved as a signal peptide; it reads MFDLRTKVMIGIASTLLIAAIMLITLVFC.

It belongs to the FAM24 family.

The protein resides in the secreted. This chain is Protein FAM24A (Fam24a), found in Mus musculus (Mouse).